Reading from the N-terminus, the 66-residue chain is Protein I177L (66 aa).

N-linked (GlcNAc...) asparagine; by host glycosylation occurs at Asn-11.

It belongs to the asfivirus I177L family.

It is found in the virion. The protein is Protein I177L of Ornithodoros (relapsing fever ticks).